The following is a 343-amino-acid chain: RNA-binding protein 43 (343 aa).

Residues 15 to 90 (RTVVVSGLPV…PRLTVSHFSE (76 aa)) form the RRM domain.

This Mus musculus (Mouse) protein is RNA-binding protein 43 (Rbm43).